The primary structure comprises 550 residues: Rhodopsin kinase grk7-b (550 aa).

The disordered stretch occupies residues 22–45 (SSEGDAKELQKRRKSLSLPPPDVS). Phosphoserine is present on S36. An RGS domain is found at 57–174 (YQSICVEQPI…QNSPFYDRFL (118 aa)). Residues 189-451 (FYEFRILGKG…DDDPRKHAFF (263 aa)) form the Protein kinase domain. ATP-binding positions include 195-203 (LGKGGFGEV) and K218. Residue D314 is the Proton acceptor of the active site. An AGC-kinase C-terminal domain is found at 452-517 (KSINFQRLEA…GAVPISWQKE (66 aa)). The residue at position 487 (S487) is a Phosphoserine. The interval 531–550 (SREVTGGGNSGEKSGVCSIL) is disordered. At C547 the chain carries Cysteine methyl ester. The S-geranylgeranyl cysteine moiety is linked to residue C547. A propeptide spans 548–550 (SIL) (removed in mature form).

The protein belongs to the protein kinase superfamily. AGC Ser/Thr protein kinase family. GPRK subfamily. Autophosphorylated in vitro at Ser-487. Phosphorylation at Ser-36 is regulated by light and activated by cAMP. As to expression, retina, cones.

The protein resides in the membrane. The enzyme catalyses L-threonyl-[rhodopsin] + ATP = O-phospho-L-threonyl-[rhodopsin] + ADP + H(+). It catalyses the reaction L-seryl-[rhodopsin] + ATP = O-phospho-L-seryl-[rhodopsin] + ADP + H(+). Retina-specific kinase involved in the shutoff of the photoresponse and adaptation to changing light conditions via cone opsin phosphorylation, including rhodopsin (RHO). The polypeptide is Rhodopsin kinase grk7-b (grk7-b) (Xenopus laevis (African clawed frog)).